Reading from the N-terminus, the 670-residue chain is DNA ligase (670 aa).

NAD(+) contacts are provided by residues 32-36 (DSEYD), 81-82 (SL), and E114. Residue K116 is the N6-AMP-lysine intermediate of the active site. R137, E174, K291, and K315 together coordinate NAD(+). Zn(2+) is bound by residues C409, C412, C427, and C433. Residues 592–670 (ASENLFKDKT…EEEFLAQITR (79 aa)) form the BRCT domain.

Belongs to the NAD-dependent DNA ligase family. LigA subfamily. Mg(2+) serves as cofactor. It depends on Mn(2+) as a cofactor.

It catalyses the reaction NAD(+) + (deoxyribonucleotide)n-3'-hydroxyl + 5'-phospho-(deoxyribonucleotide)m = (deoxyribonucleotide)n+m + AMP + beta-nicotinamide D-nucleotide.. DNA ligase that catalyzes the formation of phosphodiester linkages between 5'-phosphoryl and 3'-hydroxyl groups in double-stranded DNA using NAD as a coenzyme and as the energy source for the reaction. It is essential for DNA replication and repair of damaged DNA. The polypeptide is DNA ligase (Haemophilus influenzae (strain 86-028NP)).